The following is a 345-amino-acid chain: Phosphate import ATP-binding protein PstB 2 (345 aa).

The tract at residues 1-57 (MSDTPQSEPRRSDDRSGADDATAAAAGSTDAAAAAVSSKTGGIAGPPGGPGEVDGDE) is disordered. Basic and acidic residues predominate over residues 8-18 (EPRRSDDRSGA). A compositionally biased stretch (low complexity) spans 19–35 (DDATAAAAGSTDAAAAA). The span at 42–52 (GIAGPPGGPGE) shows a compositional bias: gly residues. One can recognise an ABC transporter domain in the interval 86–340 (VSVSDLDTYY…PQSQRVEDYV (255 aa)). 118-125 (GPSGCGKS) contacts ATP.

It belongs to the ABC transporter superfamily. Phosphate importer (TC 3.A.1.7) family. The complex is composed of two ATP-binding proteins (PstB), two transmembrane proteins (PstC and PstA) and a solute-binding protein (PstS).

The protein localises to the cell membrane. The enzyme catalyses phosphate(out) + ATP + H2O = ADP + 2 phosphate(in) + H(+). Part of the ABC transporter complex PstSACB involved in phosphate import. Responsible for energy coupling to the transport system. This is Phosphate import ATP-binding protein PstB 2 from Halobacterium salinarum (strain ATCC 700922 / JCM 11081 / NRC-1) (Halobacterium halobium).